The chain runs to 484 residues: Nuclear rim protein 1 (484 aa).

S3 carries the post-translational modification Phosphoserine. Helical transmembrane passes span 145-165 and 252-272; these read FTIF…MFGY and TAIV…AIVF. A disordered region spans residues 416 to 457; the sequence is SSNENLEKGGAFLPNQDQNRPSKSLSPLRKTPLSARQKRFEG. The residue at position 417 (S417) is a Phosphoserine. The segment covering 430–440 has biased composition (polar residues); that stretch reads NQDQNRPSKSL. A Phosphoserine modification is found at S474.

The protein belongs to the NUR1 family. In terms of assembly, interacts with CSM1.

The protein localises to the nucleus membrane. Functionally, member of a perinuclear network that controls recombination at multiple loci to maintain genome stability. Required for rDNA repeat stability. This Saccharomyces cerevisiae (strain Lalvin EC1118 / Prise de mousse) (Baker's yeast) protein is Nuclear rim protein 1 (NUR1).